The following is a 317-amino-acid chain: ADIPOR-like receptor IZH1 (317 aa).

Residues 1–80 (MSEERGMKEQ…FNNESINIYT (80 aa)) lie on the Lumenal side of the membrane. N-linked (GlcNAc...) asparagine glycosylation occurs at N73. A helical transmembrane segment spans residues 81 to 101 (HLIPGVAYLVLFLIFADLVLA). The Cytoplasmic segment spans residues 102 to 113 (QLLPGLDAGEHR). A helical transmembrane segment spans residues 114-136 (MLRFYLLGAFTCLACSSCFHCLK). Residues 137–148 (QHSEPHSRLWSK) lie on the Lumenal side of the membrane. The chain crosses the membrane as a helical span at residues 149–169 (VDYLGILAQITCSTISLLYYG). Residues 170 to 175 (YHSYPS) are Cytoplasmic-facing. The chain crosses the membrane as a helical span at residues 176 to 196 (HFVFFSTLTVALCSACAVLVL). N197 is a glycosylation site (N-linked (GlcNAc...) asparagine). Residues 197 to 210 (NDSFNTVAFRPLRA) lie on the Lumenal side of the membrane. A helical membrane pass occupies residues 211–231 (FLFMAFGLSGVIPVLAGSYQF). The Cytoplasmic segment spans residues 232-243 (GFAEWAARIQLK). Residues 244–264 (YVLYEAVFYITGALVYGFRIP) form a helical membrane-spanning segment. Over 265 to 283 (ERFAPGKFDMVGHSHQIFH) the chain is Lumenal. Residues 284-304 (LLVVLGTLCHFRAVTGSYIFI) traverse the membrane as a helical segment. Residues 305 to 317 (CTGKHYSSLLMFI) are Cytoplasmic-facing.

This sequence belongs to the ADIPOR family.

It is found in the endoplasmic reticulum membrane. In terms of biological role, ADIPOR-like receptor involved in zinc metabolism either by altering membrane sterol content or by directly altering cellular zinc levels. The sequence is that of ADIPOR-like receptor IZH1 (IZH1) from Eremothecium gossypii (strain ATCC 10895 / CBS 109.51 / FGSC 9923 / NRRL Y-1056) (Yeast).